We begin with the raw amino-acid sequence, 103 residues long: Transcription factor S (103 aa).

Positions 4, 7, 20, 23, 64, 67, 92, and 95 each coordinate Zn(2+). The C4-type zinc-finger motif lies at C4–C23. The TFIIS-type zinc finger occupies T60 to R100.

The protein belongs to the archaeal RpoM/eukaryotic RPA12/RPB9/RPC11 RNA polymerase family.

Functionally, induces RNA cleavage activity in the RNA polymerase. In its presence, the cleavage activity of the RNA polymerase truncates the RNA back to position +15 in a stepwise manner by releasing mainly dinucleotides from the 3'-end of the nascent RNA. The truncated RNAs are able to continue elongation. Involved in transcriptional proofreading and fidelity. Misincorporation of nucleotides during elongation of transcription leads to arrested elongation complexes which are rescued by TFS-promoted removal of a dinucleotide from the 3'-end. TFS is able to induce a cleavage resynthesis cycle in stalled elongation complexes (resulting from the next missing nucleotide or a reduced incorporation rate of a wrong nucleotide) preventing misincorporation and enabling proofreading in a post-incorporation manner. Pausing of elongation complexes is the main determinant of TFS-induced RNA cleavage. The chain is Transcription factor S from Archaeoglobus fulgidus (strain ATCC 49558 / DSM 4304 / JCM 9628 / NBRC 100126 / VC-16).